A 418-amino-acid chain; its full sequence is S-adenosylmethionine synthase (418 aa).

H16 contributes to the ATP binding site. Residue D18 participates in Mg(2+) binding. K(+) is bound at residue E44. Residues E57 and Q100 each coordinate L-methionine. The tract at residues 100 to 110 (QSPDISQGVTK) is flexible loop. ATP contacts are provided by residues 175–177 (DGK), 251–252 (KF), D260, 266–267 (RK), A283, and K287. D260 serves as a coordination point for L-methionine. K291 lines the L-methionine pocket.

Belongs to the AdoMet synthase family. Homotetramer; dimer of dimers. Requires Mg(2+) as cofactor. The cofactor is K(+).

It is found in the cytoplasm. The enzyme catalyses L-methionine + ATP + H2O = S-adenosyl-L-methionine + phosphate + diphosphate. It participates in amino-acid biosynthesis; S-adenosyl-L-methionine biosynthesis; S-adenosyl-L-methionine from L-methionine: step 1/1. In terms of biological role, catalyzes the formation of S-adenosylmethionine (AdoMet) from methionine and ATP. The overall synthetic reaction is composed of two sequential steps, AdoMet formation and the subsequent tripolyphosphate hydrolysis which occurs prior to release of AdoMet from the enzyme. The polypeptide is S-adenosylmethionine synthase (Gloeothece citriformis (strain PCC 7424) (Cyanothece sp. (strain PCC 7424))).